A 233-amino-acid chain; its full sequence is 6-carboxyhexanoate--CoA ligase (233 aa).

This sequence belongs to the BioW family. In terms of assembly, homodimer. The cofactor is Mg(2+).

It carries out the reaction heptanedioate + ATP + CoA = 6-carboxyhexanoyl-CoA + AMP + diphosphate. Its pathway is metabolic intermediate metabolism; pimeloyl-CoA biosynthesis; pimeloyl-CoA from pimelate: step 1/1. Catalyzes the transformation of pimelate into pimeloyl-CoA with concomitant hydrolysis of ATP to AMP. In Methanocaldococcus sp. (strain FS406-22), this protein is 6-carboxyhexanoate--CoA ligase.